Reading from the N-terminus, the 296-residue chain is 4-hydroxy-tetrahydrodipicolinate synthase (296 aa).

Threonine 47 contributes to the pyruvate binding site. Residue tyrosine 135 is the Proton donor/acceptor of the active site. Residue lysine 163 is the Schiff-base intermediate with substrate of the active site. Residue isoleucine 205 participates in pyruvate binding.

Belongs to the DapA family. As to quaternary structure, homotetramer; dimer of dimers.

Its subcellular location is the cytoplasm. The catalysed reaction is L-aspartate 4-semialdehyde + pyruvate = (2S,4S)-4-hydroxy-2,3,4,5-tetrahydrodipicolinate + H2O + H(+). Its pathway is amino-acid biosynthesis; L-lysine biosynthesis via DAP pathway; (S)-tetrahydrodipicolinate from L-aspartate: step 3/4. Catalyzes the condensation of (S)-aspartate-beta-semialdehyde [(S)-ASA] and pyruvate to 4-hydroxy-tetrahydrodipicolinate (HTPA). In Macrococcus caseolyticus (strain JCSC5402) (Macrococcoides caseolyticum), this protein is 4-hydroxy-tetrahydrodipicolinate synthase.